The chain runs to 513 residues: ATP synthase subunit alpha (513 aa).

169-176 is an ATP binding site; that stretch reads GDRQIGKT.

This sequence belongs to the ATPase alpha/beta chains family. F-type ATPases have 2 components, CF(1) - the catalytic core - and CF(0) - the membrane proton channel. CF(1) has five subunits: alpha(3), beta(3), gamma(1), delta(1), epsilon(1). CF(0) has three main subunits: a(1), b(2) and c(9-12). The alpha and beta chains form an alternating ring which encloses part of the gamma chain. CF(1) is attached to CF(0) by a central stalk formed by the gamma and epsilon chains, while a peripheral stalk is formed by the delta and b chains.

The protein resides in the cell inner membrane. It catalyses the reaction ATP + H2O + 4 H(+)(in) = ADP + phosphate + 5 H(+)(out). Its function is as follows. Produces ATP from ADP in the presence of a proton gradient across the membrane. The alpha chain is a regulatory subunit. This Shewanella sediminis (strain HAW-EB3) protein is ATP synthase subunit alpha.